The chain runs to 432 residues: Interleukin-11 receptor subunit alpha-2 (432 aa).

Residues 1–23 (MSSSCSGLTRVLVAVATALVSSS) form the signal peptide. Residues 24–372 (SPCPQAWGPP…DPLEQVAVLA (349 aa)) lie on the Extracellular side of the membrane. The 84-residue stretch at 27–110 (PQAWGPPGVQ…SGGMVTLKLG (84 aa)) folds into the Ig-like C2-type domain. 3 disulfides stabilise this stretch: Cys48-Cys94, Cys120-Cys130, and Cys170-Cys180. 2 Fibronectin type-III domains span residues 112–219 (PPAR…LRPD) and 220–317 (PPQG…TPST). N-linked (GlcNAc...) asparagine glycosylation is present at Asn127. Positions 151–170 (KTLPGAESQRESPSTGPWPC) are disordered. N-linked (GlcNAc...) asparagine glycosylation occurs at Asn194. Positions 304–308 (WSAWS) match the WSXWS motif motif. A helical transmembrane segment spans residues 373-393 (SLGIFSCLGLAVGALALGLWL). At 394–432 (RLRRSGKEGPQKPGLLAPMIPVEKLPGIPNLQRTPENFS) the chain is on the cytoplasmic side.

The protein belongs to the type I cytokine receptor family. Type 3 subfamily. In terms of assembly, on ligand binding, forms a multimer complex with IL6ST/gp130. In terms of tissue distribution, expression restricted to testis, lymph node and thymus. Highest level in testis.

Its subcellular location is the membrane. Receptor for interleukin-11. The receptor systems for IL6, LIF, OSM, CNTF, IL11 and CT1 can utilize IL6ST for initiating signal transmission. The IL11/IL11RA/IL6ST complex may be involved in the control of proliferation and/or differentiation of skeletogenic progenitor or other mesenchymal cells. The polypeptide is Interleukin-11 receptor subunit alpha-2 (Il11ra2) (Mus musculus (Mouse)).